The following is a 338-amino-acid chain: 2,3-dihydroxybenzoate decarboxylase (338 aa).

Cys-251 is an active-site residue.

The protein belongs to the metallo-dependent hydrolases superfamily. In terms of assembly, homotetramer.

It catalyses the reaction 2,3-dihydroxybenzoate + H(+) = catechol + CO2. The protein operates within aromatic compound metabolism; benzoate degradation via hydroxylation. Its function is as follows. Has an absolute substrate specificity for 2,3-DHBA. This chain is 2,3-dihydroxybenzoate decarboxylase, found in Aspergillus oryzae (strain ATCC 42149 / RIB 40) (Yellow koji mold).